A 446-amino-acid chain; its full sequence is Exodeoxyribonuclease 7 large subunit (446 aa).

Belongs to the XseA family. Heterooligomer composed of large and small subunits.

It is found in the cytoplasm. The enzyme catalyses Exonucleolytic cleavage in either 5'- to 3'- or 3'- to 5'-direction to yield nucleoside 5'-phosphates.. In terms of biological role, bidirectionally degrades single-stranded DNA into large acid-insoluble oligonucleotides, which are then degraded further into small acid-soluble oligonucleotides. This is Exodeoxyribonuclease 7 large subunit from Shewanella denitrificans (strain OS217 / ATCC BAA-1090 / DSM 15013).